We begin with the raw amino-acid sequence, 432 residues long: Adenylosuccinate synthetase (432 aa).

GTP contacts are provided by residues 13 to 19 (GDEGKGK) and 41 to 43 (GHT). The Proton acceptor role is filled by D14. Mg(2+) is bound by residues D14 and G41. Residues 14–17 (DEGK), 39–42 (NAGH), T130, R144, Q225, T240, and R304 each bind IMP. The active-site Proton donor is H42. A substrate-binding site is contributed by 300–306 (ATTGRKR). Residues R306, 332–334 (KLD), and 415–417 (STG) contribute to the GTP site.

This sequence belongs to the adenylosuccinate synthetase family. Homodimer. Mg(2+) is required as a cofactor.

The protein localises to the cytoplasm. It carries out the reaction IMP + L-aspartate + GTP = N(6)-(1,2-dicarboxyethyl)-AMP + GDP + phosphate + 2 H(+). Its pathway is purine metabolism; AMP biosynthesis via de novo pathway; AMP from IMP: step 1/2. In terms of biological role, plays an important role in the de novo pathway of purine nucleotide biosynthesis. Catalyzes the first committed step in the biosynthesis of AMP from IMP. The chain is Adenylosuccinate synthetase from Vibrio cholerae serotype O1 (strain M66-2).